A 344-amino-acid chain; its full sequence is Protein-glutamate methylesterase/protein-glutamine glutaminase (344 aa).

Residues 7-124 (RVLVVDDSAF…SLTFRQVAPE (118 aa)) enclose the Response regulatory domain. 4-aspartylphosphate is present on Asp-58. The CheB-type methylesterase domain occupies 154–344 (PAVSGKIVVI…KIPEKLIELV (191 aa)). Catalysis depends on residues Ser-166, His-193, and Asp-289.

The protein belongs to the CheB family. Post-translationally, phosphorylated by CheA. Phosphorylation of the N-terminal regulatory domain activates the methylesterase activity.

The protein resides in the cytoplasm. It catalyses the reaction [protein]-L-glutamate 5-O-methyl ester + H2O = L-glutamyl-[protein] + methanol + H(+). The catalysed reaction is L-glutaminyl-[protein] + H2O = L-glutamyl-[protein] + NH4(+). Involved in chemotaxis. Part of a chemotaxis signal transduction system that modulates chemotaxis in response to various stimuli. Catalyzes the demethylation of specific methylglutamate residues introduced into the chemoreceptors (methyl-accepting chemotaxis proteins or MCP) by CheR. Also mediates the irreversible deamidation of specific glutamine residues to glutamic acid. This is Protein-glutamate methylesterase/protein-glutamine glutaminase from Thermotoga maritima (strain ATCC 43589 / DSM 3109 / JCM 10099 / NBRC 100826 / MSB8).